The chain runs to 91 residues: Large ribosomal subunit protein uL23 (91 aa).

The protein belongs to the universal ribosomal protein uL23 family. As to quaternary structure, part of the 50S ribosomal subunit. Contacts protein L29, and trigger factor when it is bound to the ribosome.

Functionally, one of the early assembly proteins it binds 23S rRNA. One of the proteins that surrounds the polypeptide exit tunnel on the outside of the ribosome. Forms the main docking site for trigger factor binding to the ribosome. This chain is Large ribosomal subunit protein uL23, found in Staphylococcus aureus (strain USA300).